The primary structure comprises 165 residues: Small ribosomal subunit protein uS3m (165 aa).

The transit peptide at 1–30 (MNFLKKLLPQVATEVQQLSRSGFHTSSVCC) directs the protein to the mitochondrion.

This sequence belongs to the universal ribosomal protein uS3 family. Component of the mitochondrial ribosome small subunit (28S) which comprises a 12S rRNA and about 30 distinct proteins.

The protein resides in the mitochondrion. This is Small ribosomal subunit protein uS3m (mRpS24) from Drosophila melanogaster (Fruit fly).